Here is a 277-residue protein sequence, read N- to C-terminus: Alpha-ketoglutarate-dependent dioxygenase tstK (277 aa).

The protein belongs to the asaB hydroxylase/desaturase family.

It catalyses the reaction 2-[(1R,8S,14R,15R)-11-hydroxy-14,15-bis[(6E)-oct-6-en-1-yl]-3,5,9-trioxo-4,10-dioxatetracyclo[9.4.0.0(2,6).0(8,12)]pentadeca-2(6),12-dien-8-yl]acetate + 3 2-oxoglutarate + 3 O2 = phomoidride A + 3 succinate + 3 CO2 + H2O. Alpha-ketoglutarate-dependent dioxygenase; part of the gene cluster that mediates the biosynthesis of the antihypercholesterolemic agents phomoidrides which are dimeric anhydrides. Within the pathway, tstK is responsible for the iterative oxidation necessary to convert prephomoidride to phomoidride A. The pathway begins with the highly reducing polyketide synthase tstiA that catalyzes the formation of a C12-fatty acyl-ACP, starting from one acetate and 5 malonate units. The hydrolase tstM is involved in the release of the C12-fatty acyl chain from phiA. The alkylcitrate synthase (ACS) tstJ and the alkylcitrate dehydratase (ACDH) tstI then give rise to decarboxylated monomeric anhydrides by coupling the C12-fatty acyl chain with oxalacetic acid. The cyclase tstC is responsible for the dimerization of the monomeric anhydrides which leads to the production of prephomoidride that contains the characteristic bicyclo[4.3.1]deca-1,6-diene system of phomoidrides. Iterative oxidation catalyzed by the alpha-ketoglutarate-dependent dioxygenase tstK produced then phomoidride A. Finally, the methyltransferase tstE converts phomoidride A to phomoidride B via an acetalization reaction. The phosphatidylethanolamine-binding protein tstB and tstN are not essential for dimerization and their functions have still to be determined. This is Alpha-ketoglutarate-dependent dioxygenase tstK from Talaromyces stipitatus (strain ATCC 10500 / CBS 375.48 / QM 6759 / NRRL 1006) (Penicillium stipitatum).